We begin with the raw amino-acid sequence, 901 residues long: MLIPSKLSRPVRLDHTMVRERLLAKLSGANNFRLALVTSPAGYGKTTLVSQWAAGKNELGWYSLDEGDNQQERFASYLIAAIQQATGGHCSTSEAMAQKRQYASLRSLFAQLFIELAQWHRPLYLVIDDYHLITNPVIHDAMRFFLRHQPENFTLVVLSRNLPQLGIANLRVRDQLLEIGSQQLAFNHQEAKQFFDRRLSSPIEAAESSRMCDDVAGWATALQLIALSARQNHTSAHHSARRLAGINASHLSDYLVDEVLDNVDVSTRHFLLKSAILRSMNDALIVRVTGEENGQMRLEEIERQGLFLQRMDDTGEWFSYHPLFGSFLRQRCQWELAAELPEIHRAAAESWMEQGFPSEAIHHALAAGDAQMLRDILLNHAWGLFNHSELALLEESLKALPWESLLENPRLVLLQAWLMQSQHRYSEVNTLLARAEQEIKGVMDGTLHAEFNALRAQVAINDGNPEEAERLAKLALDELPLAWFYSRIVATSVHGEVLHCKGDLSQSLSLMQQTEQMARHHDVWHYALWSLIQQSEIQFAQGFLQAAWETQERAFQLIKEQHLEQLPMHEFLVRIRAQLLWAWARLDEAEASARSGIAVLSTFQPQQQLQCLTLLVQCSLARGDLDNARSQLNRLENLLGNGRYHCDWISNADKVRVIYWQLTGDKKSAANWLRHTPKPAFANNHFLQGQWRNIARAQILLGEFEPAEIVLEELNENARSLRLMSDLNRNLLLLNQLYWQSGRKNDAQRVLLDALQLANRTGFISHFVIEGEAMAQQLRQLIQLNTLPEMEQHRAQRILREINQHHRHKFAHFDEGFVERLLNHPDVPELIRTSPLTQREWQVLGLIYSGYSNEQIAGELAVAATTIKTHIRNLYQKLGVAHRQDAVQHAQQLLKMMGYGV.

39–46 (SPAGYGKT) contributes to the ATP binding site. In terms of domain architecture, HTH luxR-type spans 829–894 (ELIRTSPLTQ…DAVQHAQQLL (66 aa)). The segment at residues 853-872 (NEQIAGELAVAATTIKTHIR) is a DNA-binding region (H-T-H motif).

Belongs to the MalT family. In terms of assembly, monomer in solution. Oligomerizes to an active state in the presence of the positive effectors ATP and maltotriose.

Its activity is regulated as follows. Activated by ATP and maltotriose, which are both required for DNA binding. Its function is as follows. Positively regulates the transcription of the maltose regulon whose gene products are responsible for uptake and catabolism of malto-oligosaccharides. Specifically binds to the promoter region of its target genes, recognizing a short DNA motif called the MalT box. The polypeptide is HTH-type transcriptional regulator MalT (Salmonella gallinarum (strain 287/91 / NCTC 13346)).